A 244-amino-acid polypeptide reads, in one-letter code: L-xylulose reductase (244 aa).

An N-acetylmethionine modification is found at M1. 11–39 (LVTGAGKGIGRSTVLALKAAGAQVVAVSR) serves as a coordination point for NADP(+). R21 carries the omega-N-methylarginine modification. Residue S136 coordinates substrate. Y149 (proton acceptor) is an active-site residue. K153 is a catalytic residue.

Belongs to the short-chain dehydrogenases/reductases (SDR) family. In terms of assembly, homotetramer. In terms of tissue distribution, highly expressed in kidney and liver. Expressed in epididymis. Expressed at intermediate level in lung. Weakly expressed in brain, heart, spleen and testis.

The protein resides in the membrane. The catalysed reaction is xylitol + NADP(+) = L-xylulose + NADPH + H(+). Functionally, catalyzes the NADPH-dependent reduction of several pentoses, tetroses, trioses, alpha-dicarbonyl compounds and L-xylulose. Participates in the uronate cycle of glucose metabolism. May play a role in the water absorption and cellular osmoregulation in the proximal renal tubules by producing xylitol, an osmolyte, thereby preventing osmolytic stress from occurring in the renal tubules. The chain is L-xylulose reductase (DCXR) from Cavia porcellus (Guinea pig).